A 353-amino-acid polypeptide reads, in one-letter code: Holliday junction branch migration complex subunit RuvB (353 aa).

The interval 4-190 (HYIRFKIMTN…FGIPMRLNFY (187 aa)) is large ATPase domain (RuvB-L). ATP-binding positions include I29, R30, G71, K74, T75, T76, 137 to 139 (EDF), R180, Y190, and R227. A Mg(2+)-binding site is contributed by T75. Residues 191–261 (NTEELKKVLN…ISDFGLNRLE (71 aa)) are small ATPAse domain (RuvB-S). Positions 264–353 (RIGLDSNDYR…HQFNIFNEHE (90 aa)) are head domain (RuvB-H). DNA is bound by residues R300, R319, and R324.

It belongs to the RuvB family. Homohexamer. Forms an RuvA(8)-RuvB(12)-Holliday junction (HJ) complex. HJ DNA is sandwiched between 2 RuvA tetramers; dsDNA enters through RuvA and exits via RuvB. An RuvB hexamer assembles on each DNA strand where it exits the tetramer. Each RuvB hexamer is contacted by two RuvA subunits (via domain III) on 2 adjacent RuvB subunits; this complex drives branch migration. In the full resolvosome a probable DNA-RuvA(4)-RuvB(12)-RuvC(2) complex forms which resolves the HJ.

Its subcellular location is the cytoplasm. It carries out the reaction ATP + H2O = ADP + phosphate + H(+). The RuvA-RuvB-RuvC complex processes Holliday junction (HJ) DNA during genetic recombination and DNA repair, while the RuvA-RuvB complex plays an important role in the rescue of blocked DNA replication forks via replication fork reversal (RFR). RuvA specifically binds to HJ cruciform DNA, conferring on it an open structure. The RuvB hexamer acts as an ATP-dependent pump, pulling dsDNA into and through the RuvAB complex. RuvB forms 2 homohexamers on either side of HJ DNA bound by 1 or 2 RuvA tetramers; 4 subunits per hexamer contact DNA at a time. Coordinated motions by a converter formed by DNA-disengaged RuvB subunits stimulates ATP hydrolysis and nucleotide exchange. Immobilization of the converter enables RuvB to convert the ATP-contained energy into a lever motion, pulling 2 nucleotides of DNA out of the RuvA tetramer per ATP hydrolyzed, thus driving DNA branch migration. The RuvB motors rotate together with the DNA substrate, which together with the progressing nucleotide cycle form the mechanistic basis for DNA recombination by continuous HJ branch migration. Branch migration allows RuvC to scan DNA until it finds its consensus sequence, where it cleaves and resolves cruciform DNA. This Rickettsia massiliae (strain Mtu5) protein is Holliday junction branch migration complex subunit RuvB.